The chain runs to 279 residues: B3 domain-containing protein Os11g0156000 (279 aa).

Residues 38 to 144 (FEKPLTPSDV…DRLFIGCRRR (107 aa)) constitute a DNA-binding region (TF-B3). 2 disordered regions span residues 148–182 (AAAQ…YSTS) and 203–228 (HDHG…AGSA). Low complexity predominate over residues 159 to 168 (VRVAPAAQNA). The segment covering 203–219 (HDHGDMHHADESPRDTD) has biased composition (basic and acidic residues).

It localises to the nucleus. In Oryza sativa subsp. japonica (Rice), this protein is B3 domain-containing protein Os11g0156000.